Here is a 543-residue protein sequence, read N- to C-terminus: MAKDIKFDIEARDGLKRGVDALANAVKVTLGPKGRNVIIGKSFGGPTVTKDGVSVAKEIELKDPLENMGAQMVKEVASKTNDLAGDGTTTATVLAQAIVKEGLKNVAAGANPMDLKRGIDKAVETIVADLAKQAKVVGSDSDKIQQIASISANNDEVIGELIATAFAKVGKEGVITVEEAKGTDTFVDVVEGMQFDRGYLSPYFVTNPEKMEVELDSPYILLYDKKVSSLKELLPVLEPVAQSGKPLLIIAEDVDGEALSTLVVNKLRGALKIAAVKAPGFGDRRKAMLEDIAILTGGTVISEERGYTLENTTIEMLGNAKRVSIDKDNTTIVSGAGEADIIKNRVNQIKGQMETTTSDYDKEKLQERLAKLAGGVAVLYVGAASEVEMKEKKDRVDDALHATRAAVEEGIVAGGGVALLRAKLALADLKADNADEATGIQIVSRAIEAPLRTIVENAGLEGSVVVAKVAEGSGDFGYNAKTDEYVDMLKAGIIDPKKVTRVALENAASVSGMILTTECALIDIKEENAGGGMPMGGGMPGMM.

ATP-binding positions include 29–32 (TLGP), Lys-50, 86–90 (DGTTT), Gly-415, and Asp-495.

This sequence belongs to the chaperonin (HSP60) family. Forms a cylinder of 14 subunits composed of two heptameric rings stacked back-to-back. Interacts with the co-chaperonin GroES.

The protein localises to the cytoplasm. It carries out the reaction ATP + H2O + a folded polypeptide = ADP + phosphate + an unfolded polypeptide.. Its function is as follows. Together with its co-chaperonin GroES, plays an essential role in assisting protein folding. The GroEL-GroES system forms a nano-cage that allows encapsulation of the non-native substrate proteins and provides a physical environment optimized to promote and accelerate protein folding. The sequence is that of Chaperonin GroEL from Flavobacterium johnsoniae (strain ATCC 17061 / DSM 2064 / JCM 8514 / BCRC 14874 / CCUG 350202 / NBRC 14942 / NCIMB 11054 / UW101) (Cytophaga johnsonae).